Consider the following 140-residue polypeptide: 3-hydroxyacyl-[acyl-carrier-protein] dehydratase FabZ (140 aa).

Residue His48 is part of the active site.

Belongs to the thioester dehydratase family. FabZ subfamily.

It is found in the cytoplasm. It catalyses the reaction a (3R)-hydroxyacyl-[ACP] = a (2E)-enoyl-[ACP] + H2O. Functionally, involved in unsaturated fatty acids biosynthesis. Catalyzes the dehydration of short chain beta-hydroxyacyl-ACPs and long chain saturated and unsaturated beta-hydroxyacyl-ACPs. This Exiguobacterium sibiricum (strain DSM 17290 / CCUG 55495 / CIP 109462 / JCM 13490 / 255-15) protein is 3-hydroxyacyl-[acyl-carrier-protein] dehydratase FabZ.